Reading from the N-terminus, the 297-residue chain is HTH-type transcriptional regulator ArgP (297 aa).

Positions 4–60 (PDYRTLQALDAVIRERGFERAAQKLCITQSAVSQRIKQLENTFGQPLLVRTVPPRPT) constitute an HTH lysR-type domain. The H-T-H motif DNA-binding region spans 21 to 40 (FERAAQKLCITQSAVSQRIK).

The protein belongs to the LysR transcriptional regulatory family. As to quaternary structure, homodimer.

Controls the transcription of genes involved in arginine and lysine metabolism. The polypeptide is HTH-type transcriptional regulator ArgP (Cronobacter sakazakii (strain ATCC BAA-894) (Enterobacter sakazakii)).